The chain runs to 319 residues: Cytochrome c biogenesis protein CcsA (319 aa).

8 consecutive transmembrane segments (helical) span residues 9 to 29 (ILTHISFSIISIVITIFLISL), 48 to 68 (TFFCITGLLVTRWIYSGHFPL), 71 to 91 (LYESLIFLSWSFSVIHMVPYF), 98 to 118 (LSTITAPSTIFTQGFATSGLL), 143 to 163 (MILGYAALLCGSLLSVALLVI), 225 to 245 (IISLGFLFLTIGILSGAVWAN), 258 to 275 (ETWAFITWTLFAIYLHTR), and 286 to 306 (AIVASIGFLIIWICYFGVNLL).

It belongs to the CcmF/CycK/Ccl1/NrfE/CcsA family. May interact with Ccs1.

Its subcellular location is the plastid. It is found in the chloroplast thylakoid membrane. Functionally, required during biogenesis of c-type cytochromes (cytochrome c6 and cytochrome f) at the step of heme attachment. The chain is Cytochrome c biogenesis protein CcsA from Eucalyptus globulus subsp. globulus (Tasmanian blue gum).